The following is a 201-amino-acid chain: Small ribosomal subunit protein uS4c (201 aa).

The 69-residue stretch at 89-157 folds into the S4 RNA-binding domain; the sequence is MRLDNILFRL…VQNYIASSDP (69 aa).

It belongs to the universal ribosomal protein uS4 family. Part of the 30S ribosomal subunit. Contacts protein S5. The interaction surface between S4 and S5 is involved in control of translational fidelity.

Its subcellular location is the plastid. The protein localises to the chloroplast. Functionally, one of the primary rRNA binding proteins, it binds directly to 16S rRNA where it nucleates assembly of the body of the 30S subunit. Its function is as follows. With S5 and S12 plays an important role in translational accuracy. In Hordeum vulgare (Barley), this protein is Small ribosomal subunit protein uS4c (rps4).